The sequence spans 463 residues: Rubisco accumulation factor 1, chloroplastic (463 aa).

Positions 1 to 18 (MLSLSHPHPHPAASTTAP) are enriched in low complexity. A chloroplast-targeting transit peptide spans 1–31 (MLSLSHPHPHPAASTTAPRHQRTAPVWHRRR). The segment at 1-84 (MLSLSHPHPH…PFHPPPSPLP (84 aa)) is disordered. The span at 19 to 33 (RHQRTAPVWHRRRAS) shows a compositional bias: basic residues. The span at 43 to 53 (PGGGSTGGRGG) shows a compositional bias: gly residues. The tract at residues 83–275 (LPPSLRNLDL…SGRARVELEL (193 aa)) is N-terminal alpha-helix. Residues 240–294 (RQSREAIDVQDRVAELERALQVVETESGRARVELELERARRKAAGEEEVDEEGEE) adopt a coiled-coil conformation. The tract at residues 305–450 (VTVVRLRYGE…AEVVIVVRPP (146 aa)) is C-terminal beta sheet.

It belongs to the RAF family. Homotrimer. As to expression, expressed in bundle sheath.

The protein localises to the plastid. Its subcellular location is the chloroplast. Functionally, required for assembly or stability of RuBisCO. Acts at a postchaperonin step to fold and/or assemble the large subunit (LS) into RuBisCO. This chain is Rubisco accumulation factor 1, chloroplastic, found in Zea mays (Maize).